The primary structure comprises 236 residues: 7-cyano-7-deazaguanine synthase (236 aa).

ATP is bound at residue cysteine 7–alanine 17. Positions 185, 193, 196, and 199 each coordinate Zn(2+).

The protein belongs to the QueC family. Requires Zn(2+) as cofactor.

It carries out the reaction 7-carboxy-7-deazaguanine + NH4(+) + ATP = 7-cyano-7-deazaguanine + ADP + phosphate + H2O + H(+). It functions in the pathway purine metabolism; 7-cyano-7-deazaguanine biosynthesis. Functionally, catalyzes the ATP-dependent conversion of 7-carboxy-7-deazaguanine (CDG) to 7-cyano-7-deazaguanine (preQ(0)). This Rhizobium meliloti (strain 1021) (Ensifer meliloti) protein is 7-cyano-7-deazaguanine synthase.